A 472-amino-acid chain; its full sequence is Siroheme synthase (472 aa).

Positions 1–207 (MNFLPIFLDI…GKDQAAKAWL (207 aa)) are precorrin-2 dehydrogenase /sirohydrochlorin ferrochelatase. NAD(+) is bound by residues 22-23 (EV) and 43-44 (PR). S132 bears the Phosphoserine mark. The uroporphyrinogen-III C-methyltransferase stretch occupies residues 221 to 472 (GEVYLVGAGP…QPEGNLPGAE (252 aa)). P230 contributes to the S-adenosyl-L-methionine binding site. The active-site Proton acceptor is D253. The active-site Proton donor is the K275. S-adenosyl-L-methionine contacts are provided by residues 306–308 (GGD), I311, 336–337 (TA), M388, and G417.

The protein in the N-terminal section; belongs to the precorrin-2 dehydrogenase / sirohydrochlorin ferrochelatase family. It in the C-terminal section; belongs to the precorrin methyltransferase family.

It carries out the reaction uroporphyrinogen III + 2 S-adenosyl-L-methionine = precorrin-2 + 2 S-adenosyl-L-homocysteine + H(+). The enzyme catalyses precorrin-2 + NAD(+) = sirohydrochlorin + NADH + 2 H(+). It catalyses the reaction siroheme + 2 H(+) = sirohydrochlorin + Fe(2+). The protein operates within cofactor biosynthesis; adenosylcobalamin biosynthesis; precorrin-2 from uroporphyrinogen III: step 1/1. Its pathway is cofactor biosynthesis; adenosylcobalamin biosynthesis; sirohydrochlorin from precorrin-2: step 1/1. It participates in porphyrin-containing compound metabolism; siroheme biosynthesis; precorrin-2 from uroporphyrinogen III: step 1/1. It functions in the pathway porphyrin-containing compound metabolism; siroheme biosynthesis; siroheme from sirohydrochlorin: step 1/1. The protein operates within porphyrin-containing compound metabolism; siroheme biosynthesis; sirohydrochlorin from precorrin-2: step 1/1. Functionally, multifunctional enzyme that catalyzes the SAM-dependent methylations of uroporphyrinogen III at position C-2 and C-7 to form precorrin-2 via precorrin-1. Then it catalyzes the NAD-dependent ring dehydrogenation of precorrin-2 to yield sirohydrochlorin. Finally, it catalyzes the ferrochelation of sirohydrochlorin to yield siroheme. In Nitrosospira multiformis (strain ATCC 25196 / NCIMB 11849 / C 71), this protein is Siroheme synthase.